The following is a 207-amino-acid chain: MKTKILSLANEEVGEITLNKDIFAVEFIRDDIIKQVIDWQRAKAMSGNHKTKTVSEVSGTTKKPFKQKGTGNARQGSLRSIQMRGGGISHGPKVRSHAIKLPKKVRKLGLIHALSEKCAAGKLLIINSLKLEKPKTSVLVNLLNKFQGQSFFIIDGNKVDTNFSLATKNIYNTLIVPQIGANVYDIIRHEYVLLSQEAVSFLEERLR.

A disordered region spans residues 50–76 (KTKTVSEVSGTTKKPFKQKGTGNARQG).

Belongs to the universal ribosomal protein uL4 family. In terms of assembly, part of the 50S ribosomal subunit.

Functionally, one of the primary rRNA binding proteins, this protein initially binds near the 5'-end of the 23S rRNA. It is important during the early stages of 50S assembly. It makes multiple contacts with different domains of the 23S rRNA in the assembled 50S subunit and ribosome. Its function is as follows. Forms part of the polypeptide exit tunnel. The protein is Large ribosomal subunit protein uL4 of Rickettsia typhi (strain ATCC VR-144 / Wilmington).